The chain runs to 154 residues: 6,7-dimethyl-8-ribityllumazine synthase (154 aa).

Residues tryptophan 22, 56–58, and 80–82 contribute to the 5-amino-6-(D-ribitylamino)uracil site; these read AWE and CVI. 85 to 86 provides a ligand contact to (2S)-2-hydroxy-3-oxobutyl phosphate; sequence DT. The active-site Proton donor is histidine 88. Asparagine 113 serves as a coordination point for 5-amino-6-(D-ribitylamino)uracil. Arginine 127 lines the (2S)-2-hydroxy-3-oxobutyl phosphate pocket.

Belongs to the DMRL synthase family. As to quaternary structure, forms an icosahedral capsid composed of 60 subunits, arranged as a dodecamer of pentamers.

It catalyses the reaction (2S)-2-hydroxy-3-oxobutyl phosphate + 5-amino-6-(D-ribitylamino)uracil = 6,7-dimethyl-8-(1-D-ribityl)lumazine + phosphate + 2 H2O + H(+). The protein operates within cofactor biosynthesis; riboflavin biosynthesis; riboflavin from 2-hydroxy-3-oxobutyl phosphate and 5-amino-6-(D-ribitylamino)uracil: step 1/2. Its function is as follows. Catalyzes the formation of 6,7-dimethyl-8-ribityllumazine by condensation of 5-amino-6-(D-ribitylamino)uracil with 3,4-dihydroxy-2-butanone 4-phosphate. This is the penultimate step in the biosynthesis of riboflavin. The chain is 6,7-dimethyl-8-ribityllumazine synthase from Xanthomonas axonopodis pv. citri (strain 306).